The following is a 655-amino-acid chain: RNA-binding protein EWS (655 aa).

Residues 1–285 (MASTDYSTYS…GVYGQESGGF (285 aa)) form an EAD (Gln/Pro/Thr-rich) region. Tandem repeats lie at residues 8 to 16 (TYSQAAAQQ), 17 to 27 (GYSAYTAQPTQ), 28 to 34 (GYAQTTQ), 35 to 42 (AYGQQSYG), 43 to 50 (TYGQPTDV), 51 to 59 (SYTQAQTTA), 60 to 68 (TYGQTAYAT), 69 to 75 (SYGQPPT), 76 to 84 (GYSTPTAPQ), 85 to 91 (AYSQPVQ), 92 to 110 (GYGTGTYDSTTATVTTTQA), 111 to 116 (SYAAQT), 117 to 125 (AYGTQPAYP), 126 to 156 (TYGQQPTATAPTRPQDGNKPAETSQPQSSTG), 157 to 163 (GYNQPSL), 164 to 170 (GYGQSNY), 171 to 177 (SYPQVPG), 178 to 188 (SYPMQPVTAPP), 189 to 193 (SYPPT), 194 to 201 (SYSSSQPT), 202 to 206 (SYDQS), 207 to 212 (SYSQQN), 213 to 218 (TYGQPS), 219 to 224 (SYGQQS), 225 to 230 (SYGQQS), 231 to 238 (SYGQQPPT), 239 to 245 (SYPPQTG), 246 to 252 (SYSQAPS), 253 to 259 (QYSQQSS), 260 to 276 (SYGQQSSFRQDHPSSMG), and 277 to 285 (VYGQESGGF). Positions 8-285 (TYSQAAAQQG…GVYGQESGGF (278 aa)) are 31 X approximate tandem repeats. The tract at residues 121–350 (QPAYPTYGQQ…EGPDLDLGLP (230 aa)) is disordered. Composition is skewed to polar residues over residues 127–137 (YGQQPTATAPT) and 146–172 (AETSQPQSSTGGYNQPSLGYGQSNYSY). Positions 192 to 266 (PTSYSSSQPT…QSSSYGQQSS (75 aa)) are enriched in low complexity. Residues 256–285 (QQSSSYGQQSSFRQDHPSSMGVYGQESGGF) enclose the IQ domain. Ser-266 is modified (phosphoserine; by PKC). An asymmetric dimethylarginine mark is found at Arg-300, Arg-302, Arg-304, Arg-309, Arg-314, Arg-317, and Arg-321. The segment covering 308–334 (DRGGMSRGGRGGGRGGLGAGERGGFNK) has biased composition (gly residues). Low complexity predominate over residues 335 to 350 (PGGPMDEGPDLDLGLP). Positions 360–446 (SAIYVQGLND…SKLKVSLARK (87 aa)) constitute an RRM domain. An N6-acetyllysine modification is found at Lys-438. Disordered stretches follow at residues 447 to 524 (KPPM…WQCP) and 544 to 655 (APKP…DRPY). 2 positions are modified to asymmetric dimethylarginine: Arg-454 and Arg-463. The residue at position 470 (Arg-470) is an Asymmetric dimethylarginine; alternate. Arg-470 carries the omega-N-methylarginine; alternate modification. Positions 471–489 (GGPGGPGGPGGPMGRMGGR) are enriched in gly residues. Position 485 is an omega-N-methylarginine (Arg-485). Arg-489 is modified (asymmetric dimethylarginine; by PRMT8). Asymmetric dimethylarginine is present on residues Arg-493, Arg-499, and Arg-502. An Asymmetric dimethylarginine; alternate modification is found at Arg-505. The residue at position 505 (Arg-505) is an Omega-N-methylarginine; alternate. The segment at 517-548 (RAGDWQCPNPGCGNQNFAWRTECNQCKAPKPE) adopts a RanBP2-type zinc-finger fold. Positions 550-559 (FLPPPFPPPG) are enriched in pro residues. Arg-562 and Arg-564 each carry asymmetric dimethylarginine. The span at 565-590 (GGPGGMRGGRGGLMDRGGPGGMFRGG) shows a compositional bias: gly residues. Asymmetric dimethylarginine; alternate; by PRMT8 is present on Arg-571. Omega-N-methylarginine; alternate; by PRMT8 is present on Arg-571. Asymmetric dimethylarginine is present on residues Arg-574, Arg-580, Arg-588, and Arg-591. The span at 591–605 (RGGDRGGFRGGRGMD) shows a compositional bias: basic and acidic residues. Arg-595 carries the post-translational modification Asymmetric dimethylarginine; alternate; by PRMT8. Residue Arg-595 is modified to Omega-N-methylarginine; alternate; by PRMT8. Asymmetric dimethylarginine is present on Arg-599. Asymmetric dimethylarginine; by PRMT8 is present on Arg-602. The residue at position 606 (Arg-606) is an Asymmetric dimethylarginine; alternate; by PRMT8. At Arg-606 the chain carries Omega-N-methylarginine; alternate; by PRMT8. The span at 606 to 617 (RGGFGGGRRGGP) shows a compositional bias: gly residues. Residue Arg-614 is modified to Asymmetric dimethylarginine; alternate. The residue at position 614 (Arg-614) is an Omega-N-methylarginine; alternate. Residues Arg-632 and Arg-635 each carry the asymmetric dimethylarginine modification. The Nuclear localization signal motif lies at 638 to 655 (PGKMDKGEHRQERRDRPY). A compositionally biased stretch (basic and acidic residues) spans 640–655 (KMDKGEHRQERRDRPY).

The protein belongs to the RRM TET family. In terms of assembly, binds RNA, POLR2C, SF1 and calmodulin. Interacts with PTK2B and TDRD3. Forms a complex with REC8, PRDM9, SYCP3 and SYCP1; complex formation is dependent of phosphorylated form of REC8 and requires PRDM9 bound to hotspot DNA; EWSR1 joins PRDM9 with the chromosomal axis through REC8. Phosphorylated; calmodulin-binding inhibits phosphorylation of Ser-266. Post-translationally, highly methylated on arginine residues. Methylation is mediated by PRMT1 and, at lower level by PRMT8.

The protein localises to the nucleus. It is found in the cytoplasm. Its subcellular location is the cell membrane. Binds to ssRNA containing the consensus sequence 5'-AGGUAA-3'. Might function as a transcriptional repressor. This chain is RNA-binding protein EWS (Ewsr1), found in Mus musculus (Mouse).